Reading from the N-terminus, the 49-residue chain is Heme exporter protein C (49 aa).

The protein belongs to the CcmC/CycZ/HelC family.

Its subcellular location is the cell inner membrane. In terms of biological role, required for the export of heme to the periplasm for the biogenesis of c-type cytochromes. In Rhizobium leguminosarum bv. viciae, this protein is Heme exporter protein C.